Consider the following 452-residue polypeptide: Exodeoxyribonuclease 7 large subunit (452 aa).

Belongs to the XseA family. In terms of assembly, heterooligomer composed of large and small subunits.

Its subcellular location is the cytoplasm. The catalysed reaction is Exonucleolytic cleavage in either 5'- to 3'- or 3'- to 5'-direction to yield nucleoside 5'-phosphates.. In terms of biological role, bidirectionally degrades single-stranded DNA into large acid-insoluble oligonucleotides, which are then degraded further into small acid-soluble oligonucleotides. The polypeptide is Exodeoxyribonuclease 7 large subunit (Bacillus cereus (strain 03BB102)).